The primary structure comprises 89 residues: Defensin-like protein 78 (89 aa).

Residues 1-30 (MANNMVASPYKNTFMMIALVLILLISGSEA) form the signal peptide. 4 cysteine pairs are disulfide-bonded: cysteine 40-cysteine 75, cysteine 44-cysteine 67, cysteine 52-cysteine 73, and cysteine 56-cysteine 74.

Belongs to the DEFL family.

The protein localises to the secreted. The sequence is that of Defensin-like protein 78 from Arabidopsis thaliana (Mouse-ear cress).